The sequence spans 745 residues: Probable xanthine dehydrogenase subunit D (745 aa).

Mo-molybdopterin is bound by residues Q204, F235, and A508.

Belongs to the xanthine dehydrogenase family. Could be composed of four subunits: PucA, PucC, PucD and PucE. Requires Mo-molybdopterin as cofactor.

The catalysed reaction is xanthine + NAD(+) + H2O = urate + NADH + H(+). It carries out the reaction hypoxanthine + NAD(+) + H2O = xanthine + NADH + H(+). It functions in the pathway purine metabolism; hypoxanthine degradation; urate from hypoxanthine: step 1/2. Its pathway is purine metabolism; hypoxanthine degradation; urate from hypoxanthine: step 2/2. Its function is as follows. Oxidizes hypoxanthine and xanthine to uric acid. The polypeptide is Probable xanthine dehydrogenase subunit D (pucD) (Bacillus subtilis (strain 168)).